Reading from the N-terminus, the 299-residue chain is GTPase Era (299 aa).

One can recognise an Era-type G domain in the interval 5–172; that stretch reads KSGFVSIIGR…IDVLKTYLPE (168 aa). Positions 13–20 are G1; it reads GRPNVGKS. Position 13–20 (13–20) interacts with GTP; the sequence is GRPNVGKS. The G2 stretch occupies residues 39–43; it reads QTTRN. The interval 60–63 is G3; the sequence is DTPG. GTP is bound by residues 60–64 and 122–125; these read DTPGI and NKID. A G4 region spans residues 122-125; sequence NKID. The G5 stretch occupies residues 151–153; sequence ISA. The region spanning 203-280 is the KH type-2 domain; it reads TSEEIPHAIG…YLELWVKVQR (78 aa).

The protein belongs to the TRAFAC class TrmE-Era-EngA-EngB-Septin-like GTPase superfamily. Era GTPase family. As to quaternary structure, monomer.

The protein resides in the cytoplasm. It is found in the cell membrane. Functionally, an essential GTPase that binds both GDP and GTP, with rapid nucleotide exchange. Plays a role in 16S rRNA processing and 30S ribosomal subunit biogenesis and possibly also in cell cycle regulation and energy metabolism. This is GTPase Era from Staphylococcus aureus (strain NCTC 8325 / PS 47).